A 116-amino-acid chain; its full sequence is Guanylin (116 aa).

Positions 1 to 23 (MNACVLSVLCLLGALAVLVEGVT) are cleaved as a signal peptide. Positions 24 to 101 (VQDGDLSFPL…LQRLEAIAQD (78 aa)) are excised as a propeptide. Intrachain disulfides connect C69/C83, C105/C113, and C108/C116.

This sequence belongs to the guanylin family. In terms of tissue distribution, localized in both crypts and villi in the small intestine and to superficial epithelial cells in the colon.

The protein localises to the secreted. Functionally, endogenous activator of intestinal guanylate cyclase. It stimulates this enzyme through the same receptor binding region as the heat-stable enterotoxins. This is Guanylin (Guca2a) from Mus musculus (Mouse).